Reading from the N-terminus, the 482-residue chain is Proline--tRNA ligase (482 aa).

L-proline-binding residues include T117, E119, and R148. The ATP site is built by R148, E150, Q232, and T235. H237 contributes to the L-proline binding site. S269 contacts ATP. The interaction with tRNA stretch occupies residues 346–376 (EMRGVPLRVEIGPRDLEKGAAVISRRDTGEK). Residues C436, C441, C464, and C467 each coordinate Zn(2+).

It belongs to the class-II aminoacyl-tRNA synthetase family. ProS type 3 subfamily. Homodimer. The dimer is functionally asymmetric: only one of the two active sites at a time is able to form prolyl-adenylate, and only one tRNA molecule binds per dimer. Interacts with LeuRS, which enhances tRNA(Pro) aminoacylation.

It is found in the cytoplasm. It catalyses the reaction tRNA(Pro) + L-proline + ATP = L-prolyl-tRNA(Pro) + AMP + diphosphate. Functionally, catalyzes the attachment of proline to tRNA(Pro) in a two-step reaction: proline is first activated by ATP to form Pro-AMP and then transferred to the acceptor end of tRNA(Pro). Can inadvertently accommodate and process cysteine. This chain is Proline--tRNA ligase (proS), found in Methanothermobacter thermautotrophicus (strain ATCC 29096 / DSM 1053 / JCM 10044 / NBRC 100330 / Delta H) (Methanobacterium thermoautotrophicum).